The primary structure comprises 639 residues: MVGSKMAATASIRERQTVALKRMLNFNVPHVKNSTGEPVWKVLIYDRFGQDIISPLLSVKELRDMGITLHLLLHSDRDPIPDVPAVYFVMPTEENIDRLCQDLRNQLYESYYLNFISAISRSKLEDIANAALAASAVTQVAKVFDQYLNFITLEDDMFVLCNQNKELVSYRAINRPDITDTEMETVMDTIVDSLFCFFVTLGAVPIIRCSRGTAAEMVAVKLDKKLRENLRDARNSLFTGDPLGTGQFSFQRPLLVLVDRNIDLATPLHHTWTYQALVHDVLDFHLNRVNLEESTGVENSPAGARPKRKNKKSYDLTPVDKFWQKHKGSPFPEVAESVQQELESYRAQEDEVKRLKSIMGLEGEDEGAISMLSDNTAKLTSAVSSLPELLEKKRLIDLHTNVATAVLEHIKARKLDVYFEYEEKIMSKTTLDKSLLDVISDPDAGTPEDKMRLFLIYYISAQQAPSEVDLEQYKKALTDAGCNLSPLQYIKQWKAFAKMASTPASYGNTTTKPMGLLSRVMNTGSQFVMEGVKNLVLKQQNLPVTRILDNLMEMKSNPETDDYRYFDPKMLRSNDSSVPRNKSPFQEAIVFVVGGGNYIEYQNLVDYIKAKQGKHILYGCSEIFNATQFIKQLSQLGQK.

A phosphoserine mark is found at Ser34, Ser300, and Ser525.

The protein belongs to the STXBP/unc-18/SEC1 family. In terms of assembly, interacts with STX17. Interacts with STX5A. Interacts with the COG complex via COG4.

It localises to the cytoplasm. The protein resides in the endoplasmic reticulum membrane. Its subcellular location is the golgi apparatus. It is found in the golgi stack membrane. Functionally, plays a role in SNARE-pin assembly and Golgi-to-ER retrograde transport via its interaction with COG4. Involved in vesicular transport between the endoplasmic reticulum and the Golgi. This Mus musculus (Mouse) protein is Sec1 family domain-containing protein 1 (Scfd1).